The sequence spans 478 residues: Membrane-bound lytic murein transglycosylase F (478 aa).

The N-terminal stretch at 1–22 (MTRFLFAIILGFLLTACQQVTV) is a signal peptide. Residues 23–257 (EETEYVPHKL…HLNEKYFGHV (235 aa)) form a non-LT domain region. Positions 258–478 (KRFDYIDTRA…PGTLSPDKPK (221 aa)) are LT domain. Glu302 is an active-site residue. The interval 446 to 478 (SKQQNSDEEEPSDLASEDGPAPVPGTLSPDKPK) is disordered. Over residues 451 to 461 (SDEEEPSDLAS) the composition is skewed to acidic residues.

It in the N-terminal section; belongs to the bacterial solute-binding protein 3 family. This sequence in the C-terminal section; belongs to the transglycosylase Slt family.

It localises to the cell outer membrane. It catalyses the reaction Exolytic cleavage of the (1-&gt;4)-beta-glycosidic linkage between N-acetylmuramic acid (MurNAc) and N-acetylglucosamine (GlcNAc) residues in peptidoglycan, from either the reducing or the non-reducing ends of the peptidoglycan chains, with concomitant formation of a 1,6-anhydrobond in the MurNAc residue.. Functionally, murein-degrading enzyme that degrades murein glycan strands and insoluble, high-molecular weight murein sacculi, with the concomitant formation of a 1,6-anhydromuramoyl product. Lytic transglycosylases (LTs) play an integral role in the metabolism of the peptidoglycan (PG) sacculus. Their lytic action creates space within the PG sacculus to allow for its expansion as well as for the insertion of various structures such as secretion systems and flagella. The sequence is that of Membrane-bound lytic murein transglycosylase F from Shewanella sp. (strain MR-4).